The sequence spans 545 residues: Transducer protein Htr7 (545 aa).

3 consecutive transmembrane segments (helical) span residues 10–30 (AVVA…AAAL), 44–64 (FWMA…SLML), and 80–100 (PLMA…LAIV). Residues 111 to 157 (AQRRQEAEEERAEAERAREKAEQKQAEAERQTAEAESAKQDARERSA) are disordered. Basic and acidic residues predominate over residues 123–157 (EAERAREKAEQKQAEAERQTAEAESAKQDARERSA). In terms of domain architecture, HAMP spans 164–217 (ADLESQATEVGATLEAASDGDLTARVDATTDNAEIAEVATVVNDMLTTMERTID). Residues 236 to 476 (GAKEIQDASQ…RVVSSVDDIA (241 aa)) form the Methyl-accepting transducer domain. The residue at position 281 (E281) is a Glutamate methyl ester (Glu). The segment at 521-545 (LNEFRTEATGTAHGEATDAPAGQSD) is disordered. Residues 527 to 539 (EATGTAHGEATDA) show a composition bias toward low complexity.

The protein belongs to the methyl-accepting chemotaxis (MCP) protein family. Methylated by CheR.

It localises to the cell membrane. In terms of biological role, potentially involved in chemo- or phototactic signal transduction. This is Transducer protein Htr7 (htr7) from Halobacterium salinarum (strain ATCC 29341 / DSM 671 / R1).